A 165-amino-acid polypeptide reads, in one-letter code: 3-isopropylmalate dehydratase small subunit 2 (165 aa).

This sequence belongs to the LeuD family. LeuD type 2 subfamily. Heterodimer of LeuC and LeuD.

The enzyme catalyses (2R,3S)-3-isopropylmalate = (2S)-2-isopropylmalate. The protein operates within amino-acid biosynthesis; L-leucine biosynthesis; L-leucine from 3-methyl-2-oxobutanoate: step 2/4. Catalyzes the isomerization between 2-isopropylmalate and 3-isopropylmalate, via the formation of 2-isopropylmaleate. The chain is 3-isopropylmalate dehydratase small subunit 2 (leuD2) from Archaeoglobus fulgidus (strain ATCC 49558 / DSM 4304 / JCM 9628 / NBRC 100126 / VC-16).